We begin with the raw amino-acid sequence, 535 residues long: MSVVCRSSCSLLLLPCLLLCVLGPSASHAGKLLVIPIDGSHWLSMLGVIQQLQQKGHEVVVIAPEASIHIKEGSFYTMRKYPVPFQNENVTAAFVELGRSVFDQDPFLLRVVKTYNKVKRDSSMLLSGCSHLLHNAEFMASLEQSHFDALLTDPFLPCGSIVAQYLSLPAVYFLNALPCSLDLEATQCPAPLSYVPKSLSSNTDRMNFLQRVKNMIIALTENFLCRVVYSPYGSLATEILQKEVTVKDLLSPASIWLMRNDFVKDYPRPIMPNMVFIGGINCLQKKALSQEFEAYVNASGEHGIVVFSLGSMVSEIPEKKAMEIAEALGRIPQTVLWRYTGTRPSNLAKNTILVKWLPQNDLLGHPKARAFITHSGSHGIYEGICNGVPMVMMPLFGDQMDNAKRMETRGAGVTLNVLEMTADDLENALKTVINNKSYKENIMRLSSLHKDRPIEPLDLAVFWVEYVMRHKGAPHLRPAAHDLTWYQYHSLDVIGFLLAIVLTVVFIVYKSCAYGCRKCFGGKGRVKKSHKSKTH.

An N-terminal signal peptide occupies residues 1–29; that stretch reads MSVVCRSSCSLLLLPCLLLCVLGPSASHA. 3 N-linked (GlcNAc...) asparagine glycosylation sites follow: asparagine 89, asparagine 297, and asparagine 435. The helical transmembrane segment at 493 to 509 threads the bilayer; it reads VIGFLLAIVLTVVFIVY.

It belongs to the UDP-glycosyltransferase family. In terms of assembly, homodimers. Homooligomer. Interacts with UGT1A3, UGT1A4, UGT1A6, UGT1A7, UGT1A8, UGT1A9 and UGT1A10 to form heterodimers.

Its subcellular location is the endoplasmic reticulum membrane. The enzyme catalyses glucuronate acceptor + UDP-alpha-D-glucuronate = acceptor beta-D-glucuronoside + UDP + H(+). It carries out the reaction 17beta-estradiol + UDP-alpha-D-glucuronate = 17beta-estradiol 3-O-(beta-D-glucuronate) + UDP + H(+). It catalyses the reaction 2-hydroxyestrone + UDP-alpha-D-glucuronate = 2-hydroxyestrone 3-O-(beta-D-glucuronate) + UDP + H(+). The catalysed reaction is 2-hydroxy-17beta-estradiol + UDP-alpha-D-glucuronate = 2-hydroxy-17beta-estradiol 3-O-(beta-D-glucuronate) + UDP + H(+). The enzyme catalyses 2-methoxy-17beta-estradiol + UDP-alpha-D-glucuronate = 2-methoxy-17beta-estradiol 3-O-(beta-D-glucuronate) + UDP + H(+). It carries out the reaction 17alpha-estradiol + UDP-alpha-D-glucuronate = 17alpha-estradiol 3-O-(beta-D-glucuronate) + UDP + H(+). It catalyses the reaction 16beta,17beta-estriol + UDP-alpha-D-glucuronate = 16beta,17beta-estriol 16-O-(beta-D-glucuronate) + UDP + H(+). The catalysed reaction is losartan + UDP-alpha-D-glucuronate = losartan-2-N-beta-D-glucuronide + UDP. The enzyme catalyses prunetin + UDP-alpha-D-glucuronate = prunetin-4'-O-beta-D-glucuronide + UDP. It carries out the reaction SN-38 + UDP-alpha-D-glucuronate = SN-38 O-beta-D-glucuronide + UDP + H(+). It catalyses the reaction (4Z,15Z)-bilirubin IXalpha + UDP-alpha-D-glucuronate = (4Z,15Z)-bilirubin IXalpha C12-beta-D-glucuronoside + UDP. The catalysed reaction is (4Z,15Z)-bilirubin IXalpha + UDP-alpha-D-glucuronate = (4Z,15Z)-bilirubin IXalpha C8-beta-D-glucuronoside + UDP. The enzyme catalyses (4Z,15Z)-bilirubin IXalpha C8-beta-D-glucuronoside + UDP-alpha-D-glucuronate = (4Z,15Z)-bilirubin IXalpha C8,C12-beta-D-bisglucuronoside + UDP. It carries out the reaction (4Z,15Z)-bilirubin IXalpha C12-beta-D-glucuronoside + UDP-alpha-D-glucuronate = (4Z,15Z)-bilirubin IXalpha C8,C12-beta-D-bisglucuronoside + UDP. It catalyses the reaction 8-iso-prostaglandin F2alpha + UDP-alpha-D-glucuronate = 8-iso-prostaglandin F2alpha-glucuronide + UDP + H(+). The catalysed reaction is (5Z,8Z,11Z,14Z)-eicosatetraenoate + UDP-alpha-D-glucuronate = O-[(5Z),(8Z),(11Z),(14Z)-eicosatetraenoyl]-beta-D-glucuronate + UDP. The enzyme catalyses 15-hydroxy-(5Z,8Z,11Z,13E)-eicosatetraenoate + UDP-alpha-D-glucuronate = 15-O-(beta-D-glucuronosyl)-(5Z,8Z,11Z,14Z)-eicosatetraenoate + UDP + H(+). It carries out the reaction 20-hydroxy-(5Z,8Z,11Z,14Z)-eicosatetraenoate + UDP-alpha-D-glucuronate = 20-O-(beta-D-glucuronosyl)-(5Z,8Z,11Z,14Z)-eicosatetraenoate + UDP + H(+). It catalyses the reaction prostaglandin B1 + UDP-alpha-D-glucuronate = 15-O-(beta-D-glucuronosyl)-prostaglandin B1 + UDP + H(+). The catalysed reaction is (E)-ferulate + UDP-alpha-D-glucuronate = (E)-4-O-(beta-D-glucuronosyl)-ferulate + UDP + H(+). The enzyme catalyses (E)-ferulate + UDP-alpha-D-glucuronate = (E)-ferulic acid beta-D-glucuronate ester + UDP. UDP-glucuronosyltransferase (UGT) that catalyzes phase II biotransformation reactions in which lipophilic substrates are conjugated with glucuronic acid to increase the metabolite's water solubility, thereby facilitating excretion into either the urine or bile. Essential for the elimination and detoxification of drugs, xenobiotics and endogenous compounds. Catalyzes the glucuronidation of endogenous estrogen hormones such as estradiol, estrone and estriol. Involved in the glucuronidation of bilirubin, a degradation product occurring in the normal catabolic pathway that breaks down heme in vertebrates. Involved in the glucuronidation of arachidonic acid (AA) and AA-derived eicosanoids including 15-HETE, 20-HETE, PGB1 and F2-isoprostane (8-iso-PGF2alpha). Involved in the glucuronidation of the phytochemical ferulic acid at the phenolic or the carboxylic acid group. Also catalyzes the glucuronidation the isoflavones genistein, daidzein, glycitein, formononetin, biochanin A and prunetin, which are phytoestrogens with anticancer and cardiovascular properties. Involved in the glucuronidation of the AGTR1 angiotensin receptor antagonist losartan, a drug which can inhibit the effect of angiotensin II. Involved in the biotransformation of 7-ethyl-10-hydroxycamptothecin (SN-38), the pharmacologically active metabolite of the anticancer drug irinotecan. In Rattus norvegicus (Rat), this protein is UDP-glucuronosyltransferase 1A1.